A 101-amino-acid polypeptide reads, in one-letter code: uncharacterized protein (101 aa).

The first 25 residues, 1–25 (MRKKRLLSRISFSSLFLLCGTLLSA), serve as a signal peptide directing secretion. Cysteine 26 carries N-palmitoyl cysteine lipidation. Cysteine 26 carries S-diacylglycerol cysteine lipidation.

This sequence belongs to the MG439/MG440 family.

The protein localises to the cell membrane. This is an uncharacterized protein from Mycoplasma pneumoniae (strain ATCC 29342 / M129 / Subtype 1) (Mycoplasmoides pneumoniae).